The primary structure comprises 3423 residues: Genome polyprotein (3423 aa).

Residues 1–25 (MKNPKKKSGGFRIVNMLKRGVARVS) form a disordered region. The Cytoplasmic segment spans residues 1 to 104 (MKNPKKKSGG…INARKEKKRR (104 aa)). Positions 37-72 (LLLGHGPIRMVLAILAFLRFTAIKPSLGLINRWGSV) are hydrophobic; homodimerization of capsid protein C. Residues 105 to 122 (GTDTSVGIVGLLLTTAMA) constitute a propeptide, ER anchor for capsid protein C, removed in mature form by serine protease NS3. The helical transmembrane segment at 105 to 125 (GTDTSVGIVGLLLTTAMAVEV) threads the bilayer. Residues 126 to 249 (TRRGNAYYMY…YTKHLIRVEN (124 aa)) are Extracellular-facing. Asn-192 carries an N-linked (GlcNAc...) asparagine; by host glycan. Residues 250–269 (WIFRNPGFALAAAAIAWLLG) traverse the membrane as a helical segment. Residues 270 to 274 (SSTSQ) are Cytoplasmic-facing. The helical transmembrane segment at 275–290 (KVIYLVMILLIAPAYS) threads the bilayer. The Extracellular segment spans residues 291–745 (IRCIGVSNRD…HQIFGAAFKS (455 aa)). Residue Lys-328 forms a Glycyl lysine isopeptide (Lys-Gly) (interchain with G-Cter in ubiquitin) linkage. 2 disulfides stabilise this stretch: Cys-350–Cys-406 and Cys-382–Cys-411. Positions 388-401 (DRGWGNGCGLFGKG) are fusion peptide. N-linked (GlcNAc...) asparagine; by host glycosylation is present at Asn-444. Intrachain disulfides connect Cys-480–Cys-581 and Cys-598–Cys-629. Lys-571 participates in a covalent cross-link: Glycyl lysine isopeptide (Lys-Gly) (interchain with G-Cter in ubiquitin). Residues 746–767 (LFGGMSWFSQILIGTLLVWLGL) traverse the membrane as a helical segment. The Cytoplasmic portion of the chain corresponds to 768 to 773 (NTKNGS). The helical transmembrane segment at 774–794 (ISLMCLALGGVLIFLSTAVSA) threads the bilayer. Over 795-1177 (DVGCSVDFSK…EGLKKRMTTK (383 aa)) the chain is Lumenal. 6 disulfides stabilise this stretch: Cys-798–Cys-809, Cys-849–Cys-937, Cys-973–Cys-1017, Cys-1074–Cys-1123, Cys-1085–Cys-1106, and Cys-1107–Cys-1110. N-linked (GlcNAc...) asparagine; by host glycans are attached at residues Asn-924 and Asn-1001. A helical transmembrane segment spans residues 1178–1198 (IIISTSMAVLVAMILGGFSMS). Residues 1199–1220 (DLAKLAILMGATFAEMNTGGDV) are Cytoplasmic-facing. Residues 1221–1241 (AHLALIAAFKVRPALLVSFIF) form a helical membrane-spanning segment. Topologically, residues 1242–1270 (RANWTPRESMLLALASCLLQTAISALEGD) are lumenal. Residues 1271–1291 (LMVPINGFALAWLAIRAMVVP) form a helical membrane-spanning segment. Topologically, residues 1292–1295 (RTDN) are cytoplasmic. The chain crosses the membrane as a helical span at residues 1296-1316 (ITLAILAALTPLARGTLLVAW). Residues 1317–1345 (RAGLATCGGFMLLSLKGKGSVKKNLPFVM) are Lumenal-facing. The helical transmembrane segment at 1346–1366 (ALGLTAVRLVDPINVVGLLLL) threads the bilayer. Over 1367-1373 (TRSGKRS) the chain is Cytoplasmic. A helical membrane pass occupies residues 1374 to 1394 (WPPSEVLTAVGLICALAGGFA). Topologically, residues 1395–1397 (KAD) are lumenal. A helical transmembrane segment spans residues 1398-1418 (IEMAGPMAAVGLLIVSYVVSG). Residues 1419-1472 (KSVDMYIERAGDITWEKDAEVTGNSPRLDVALDESGDFSLVEDDGPPMREIILK) are Cytoplasmic-facing. The segment at 1425–1464 (IERAGDITWEKDAEVTGNSPRLDVALDESGDFSLVEDDGP) is interacts with and activates NS3 protease. The interval 1429-1451 (GDITWEKDAEVTGNSPRLDVALD) is disordered. The helical intramembrane region spans 1473–1493 (VVLMAICGMNPIAIPFAAGAW). The Lumenal segment spans residues 1494–2170 (YVYVKTGKRS…KAAAAQLPET (677 aa)). The 178-residue stretch at 1503–1680 (SGALWDVPAP…RREEETPVEC (178 aa)) folds into the Peptidase S7 domain. Active-site charge relay system; for serine protease NS3 activity residues include His-1553, Asp-1577, and Ser-1637. Residues 1683 to 1839 (PSMLKKKQLT…DSNSPIMDTE (157 aa)) enclose the Helicase ATP-binding domain. Residues 1687-1690 (KKKQ) form an important for RNA-binding region. Residue 1696–1703 (LHPGAGKT) coordinates ATP. Residues 1787–1790 (DEAH) carry the DEAH box motif. The Helicase C-terminal domain maps to 1834 to 2013 (PIMDTEVEVP…GLIASLYRPE (180 aa)). N6-acetyllysine; by host is present on Lys-1891. The helical transmembrane segment at 2171 to 2191 (LETIMLLGLLGTVSLGIFFVL) threads the bilayer. Topologically, residues 2192 to 2195 (MRNK) are lumenal. The segment at residues 2196–2216 (GIGKMGFGMVTLGASAWLMWL) is an intramembrane region (helical). The Cytoplasmic portion of the chain corresponds to 2217–2218 (SE). A helical membrane pass occupies residues 2219-2239 (IEPARIACVLIVVFLLLVVLI). At 2240–2254 (PEPEKQRSPQDNQMA) the chain is on the lumenal side. Residues 2255-2269 (IIIMVAVGLLGLITA) constitute an intramembrane region (helical). Topologically, residues 2270–2307 (NELGWLERTKSDLSHLMGRREEGATIGFSMDIDLRPAS) are lumenal. An intramembrane region (helical) is located at residues 2308 to 2328 (AWAIYAALTTFITPAVQHAVT). The Lumenal segment spans residues 2329-2344 (TSYNNYSLMAMATQAG). The helical transmembrane segment at 2345 to 2365 (VLFGMGKGMPFYAWDFGVPLL) threads the bilayer. The Cytoplasmic segment spans residues 2366–2375 (MIGCYSQLTP). The chain crosses the membrane as a helical span at residues 2376 to 2396 (LTLIVAIILLVAHYMYLIPGL). Over 2397–2441 (QAAAARAAQKRTAAGIMKNPVVDGIVVTDIDTMTIDPQVEKKMGQ) the chain is Lumenal. The chain crosses the membrane as a helical span at residues 2442 to 2462 (VLLIAVAVSSAILSRTAWGWG). The Cytoplasmic segment spans residues 2463 to 3423 (EAGALITAAT…GEEGSTPGVL (961 aa)). Positions 2521 to 2785 (GGGTGETLGE…DVNLGSGTRA (265 aa)) constitute an mRNA cap 0-1 NS5-type MT domain. 2533–2539 (KARLNQM) contributes to the GTP binding site. Residue Ser-2576 participates in S-adenosyl-L-methionine binding. A Phosphoserine modification is found at Ser-2576. The active-site For 2'-O-MTase activity is the Lys-2581. The tract at residues 2597-2600 (VIDL) is SUMO-interacting motif (SIM). S-adenosyl-L-methionine-binding residues include Gly-2606, Trp-2607, Thr-2624, Lys-2625, His-2630, Glu-2631, Asp-2651, Val-2652, Asp-2666, and Ile-2667. Asp-2666 functions as the For 2'-O-MTase activity in the catalytic mechanism. 2669–2675 (ESSSSPE) lines the GTP pocket. Residue Lys-2702 is the For 2'-O-MTase activity of the active site. GTP is bound at residue 2733–2735 (RNS). The For 2'-O-MTase activity role is filled by Glu-2738. Tyr-2740 is an S-adenosyl-L-methionine binding site. The short motif at 2908 to 2914 (KHKRPRV) is the Nuclear localization signal (NLS) element. 4 residues coordinate Zn(2+): Glu-2959, His-2963, Cys-2968, and Cys-2971. In terms of domain architecture, RdRp catalytic spans 3049-3199 (GRMYADDTAG…KPIDDRFAHA (151 aa)). Zn(2+) is bound by residues His-3234, Cys-3250, and Cys-3369.

The protein in the N-terminal section; belongs to the class I-like SAM-binding methyltransferase superfamily. mRNA cap 0-1 NS5-type methyltransferase family. Homodimer. Interacts with host SERTAD3; this interaction promotes capsid protein C degradation. Interacts with host CAPRIN1; this interaction is probably linked to the inhibition of stress granules formation by the virus. Interacts with host G3BP1; this interaction is probably linked to the inhibition of stress granules formation by the virus. As to quaternary structure, forms heterodimers with envelope protein E in the endoplasmic reticulum and Golgi. Interacts with non-structural protein 2A. In terms of assembly, homodimer; in the endoplasmic reticulum and Golgi. Interacts with host TYRO3, AXL and DC-SIGN proteins. Interacts with non-structural protein 2A. Interacts with host HAVCR1; this interaction likely mediates virus attachment to host cell. Interacts with host NCAM1. Interacts with host HSPA5. Interacts with Aedes aegypti SRPN25, APY and venom allergen-1 salivary proteins; the interactions do not affect Zika virus replication in human endothelial cells and keratinocytes. Homodimer; Homohexamer when secreted. Interacts with host TBK1. Interacts with host USP8. Interacts with envelope protein E. As to quaternary structure, interacts with the structural protein prM/E complex, and the NS2B/NS3 protease complex. In terms of assembly, forms a heterodimer with serine protease NS3. May form homooligomers. Interacts with human SPCS1. Interacts with non-structural protein 2A. Forms a heterodimer with NS2B. Interacts with NS4B. Interacts with unphosphorylated RNA-directed RNA polymerase NS5; this interaction stimulates RNA-directed RNA polymerase NS5 guanylyltransferase activity. Interacts with non-structural protein 2A. Interacts with host SHFL; this interaction promotes NS3 degradation via a lysosome-dependent pathway. Interacts with host CEP63; this interaction disorganizes the centrosome and inhibits host innate immune response. As to quaternary structure, may interact with host ANKLE2; the interaction may cause defects in brain development, such as microcephaly. May interact with host SRPRA and SEC61G. In terms of assembly, interacts with serine protease NS3. Interacts with NS1. Homodimer. Interacts with host STAT2; this interaction inhibits the phosphorylation of the latter, and, when all viral proteins are present (polyprotein), targets STAT2 for degradation. Interacts with host TBK1 and IKBKE; these interactions lead to the inhibition of the host RIG-I signaling pathway. Interacts with host PAF1 complex; the interaction may prevent the recruitment of the host PAF1 complex to interferon-responsive genes, and thus reduces the immune response. Interacts with serine protease NS3. Interacts with host KPNA2. Interacts with host ZSWIM8; this interaction allows STAT2 binding to ZSWIM8 and subsequent proteasomal degradation leading to inhibition of interferon signaling. Post-translationally, specific enzymatic cleavages in vivo yield mature proteins. Cleavages in the lumen of endoplasmic reticulum are performed by host signal peptidase, whereas cleavages in the cytoplasmic side are performed by serine protease NS3. Signal cleavage at the 2K-4B site requires a prior NS3 protease-mediated cleavage at the 4A-2K site. In terms of processing, cleaved in post-Golgi vesicles by a host furin, releasing the mature small envelope protein M, and peptide pr. This cleavage is incomplete as up to 30% of viral particles still carry uncleaved prM. N-glycosylation plays a role in virulence in mammalian and mosquito hosts, but may have no effect on neurovirulence. Post-translationally, ubiquitination by host TRIM7 promotes virus attachment and fusion of the virus and the host endosome membrane. In terms of processing, N-glycosylated. The excreted form is glycosylated, which is required for efficient secretion of the protein from infected cells. Ubiquitination by host TRIM22 leads to proteasomal degradation. Post-translationally, acetylated by host KAT5. Acetylation modulates NS3 RNA-binding and unwinding activities and plays an important positive role for viral replication. In terms of processing, phosphorylated on serines residues. This phosphorylation may trigger NS5 nuclear localization. Sumoylated, required for regulating IFN induced interferon stimulated genes/ISGs.

It is found in the virion. The protein localises to the host nucleus. It localises to the host cytoplasm. The protein resides in the host perinuclear region. Its subcellular location is the secreted. It is found in the virion membrane. The protein localises to the host endoplasmic reticulum membrane. It localises to the host cell surface. The catalysed reaction is a 5'-end (5'-triphosphoguanosine)-ribonucleoside in mRNA + S-adenosyl-L-methionine = a 5'-end (N(7)-methyl 5'-triphosphoguanosine)-ribonucleoside in mRNA + S-adenosyl-L-homocysteine. It catalyses the reaction a 5'-end (N(7)-methyl 5'-triphosphoguanosine)-ribonucleoside in mRNA + S-adenosyl-L-methionine = a 5'-end (N(7)-methyl 5'-triphosphoguanosine)-(2'-O-methyl-ribonucleoside) in mRNA + S-adenosyl-L-homocysteine + H(+). The enzyme catalyses RNA(n) + a ribonucleoside 5'-triphosphate = RNA(n+1) + diphosphate. It carries out the reaction Selective hydrolysis of -Xaa-Xaa-|-Yaa- bonds in which each of the Xaa can be either Arg or Lys and Yaa can be either Ser or Ala.. The catalysed reaction is a ribonucleoside 5'-triphosphate + H2O = a ribonucleoside 5'-diphosphate + phosphate + H(+). It catalyses the reaction ATP + H2O = ADP + phosphate + H(+). Its function is as follows. Plays a role in virus budding by binding to the cell membrane and gathering the viral RNA into a nucleocapsid that forms the core of the mature virus particle. During virus entry, may induce genome penetration into the host cytoplasm after hemifusion induced by the surface proteins. Can migrate to the cell nucleus where it modulates host functions. Inhibits the integrated stress response (ISR) in the infected cell. Inhibits RNA silencing by interfering with host Dicer. Functionally, prevents premature fusion activity of envelope proteins in trans-Golgi by binding to envelope protein E at pH 6.0. After virion release in extracellular space, gets dissociated from E dimers. In terms of biological role, plays a role in host immune defense modulation and protection of envelope protein E during virion synthesis. PrM-E cleavage is inefficient, many virions are only partially matured and immature prM-E proteins could play a role in immune evasion. Contributes to fetal microcephaly in humans. Acts as a chaperone for envelope protein E during intracellular virion assembly by masking and inactivating envelope protein E fusion peptide. prM is the only viral peptide matured by host furin in the trans-Golgi network probably to avoid catastrophic activation of the viral fusion activity in acidic Golgi compartment prior to virion release. Its function is as follows. May play a role in virus budding. Exerts cytotoxic effects by activating a mitochondrial apoptotic pathway through M ectodomain. May display a viroporin activity. Binds to host cell surface receptors and mediates fusion between viral and cellular membranes. Efficient virus attachment to cell is, at least in part, mediated by host HAVCR1 in a cell-type specific manner. In addition, host NCAM1 can also be used as entry receptor. Interaction with host HSPA5 plays an important role in the early stages of infection as well. Envelope protein is synthesized in the endoplasmic reticulum and forms a heterodimer with protein prM. The heterodimer plays a role in virion budding in the ER, and the newly formed immature particle is covered with 60 spikes composed of heterodimers between precursor prM and envelope protein E. The virion is transported to the Golgi apparatus where the low pH causes the dissociation of PrM-E heterodimers and formation of E homodimers. PrM-E cleavage is inefficient, many virions are only partially matured and immature prM-E proteins could play a role in immune evasion. Functionally, plays a role in the inhibition of host RLR-induced interferon-beta activation by targeting TANK-binding kinase 1/TBK1. In addition, recruits the host deubiquitinase USP8 to cleave 'Lys-11'-linked polyubiquitin chains from caspase-1/CASP1 thus inhibiting its proteasomal degradation. In turn, stabilized CASP1 promotes cleavage of cGAS, which inhibits its ability to recognize mitochondrial DNA release and initiate type I interferon signaling. In terms of biological role, component of the viral RNA replication complex that recruits genomic RNA, the structural protein prM/E complex, and the NS2B/NS3 protease complex to the virion assembly site and orchestrates virus morphogenesis. Also antagonizes the host alpha/beta interferon antiviral response. May disrupt adherens junction formation and thereby impair proliferation of radial cells in the host cortex. Its function is as follows. Required cofactor for the serine protease function of NS3. Displays three enzymatic activities: serine protease, NTPase and RNA helicase. NS3 serine protease, in association with NS2B, performs its autocleavage and cleaves the polyprotein at dibasic sites in the cytoplasm: C-prM, NS2A-NS2B, NS2B-NS3, NS3-NS4A, NS4A-2K and NS4B-NS5. NS3 RNA helicase binds RNA and unwinds dsRNA in the 3' to 5' direction. Leads to translation arrest when expressed ex vivo. Disrupts host centrosome organization in a CEP63-dependent manner to degrade host TBK1 and inhibits innate immune response. Inhibits the integrated stress response (ISR) in the infected cell. Functionally, regulates the ATPase activity of the NS3 helicase activity. NS4A allows NS3 helicase to conserve energy during unwinding. Cooperatively with NS4B suppresses the Akt-mTOR pathway and leads to cellular dysregulation. By inhibiting host ANKLE2 functions, may cause defects in brain development, such as microcephaly. Also antagonizes the host MDA5-mediated induction of alpha/beta interferon antiviral response. Leads to translation arrest when expressed ex vivo. Inhibits the integrated stress response (ISR) in the infected cell. In terms of biological role, functions as a signal peptide for NS4B and is required for the interferon antagonism activity of the latter. Its function is as follows. Induces the formation of ER-derived membrane vesicles where the viral replication takes place. Also plays a role in the inhibition of host RLR-induced interferon-beta production at TANK-binding kinase 1/TBK1 level. Cooperatively with NS4A suppresses the Akt-mTOR pathway and leads to cellular dysregulation. Replicates the viral (+) and (-) RNA genome, and performs the capping of genomes in the cytoplasm. Methylates viral RNA cap at guanine N-7 and ribose 2'-O positions. Once sufficient NS5 is expressed, binds to the cap-proximal structure and inhibits further translation of the viral genome. Besides its role in RNA genome replication, also prevents the establishment of a cellular antiviral state by blocking the interferon-alpha/beta (IFN-alpha/beta) signaling pathway. Mechanistically, interferes with host kinases TBK1 and IKKE upstream of interferon regulatory factor 3/IRF3 to inhibit the RIG-I pathway. Also antagonizes type I interferon signaling by targeting STAT2 for degradation by the proteasome thereby preventing activation of JAK-STAT signaling pathway. Mechanistically, acts as a scaffold protein to connect host ZSWIM8/CUL3 ligase complex and STAT2, leading to STAT2 degradation. Within the host nucleus, disrupts host SUMO1 and STAT2 co-localization with PML, resulting in PML degradation. May also reduce immune responses by preventing the recruitment of the host PAF1 complex to interferon-responsive genes. This chain is Genome polyprotein, found in Zika virus (isolate ZIKV/Human/Cambodia/FSS13025/2010) (ZIKV).